We begin with the raw amino-acid sequence, 493 residues long: Chaperone SurA (493 aa).

The N-terminal stretch at 1 to 33 (MKRQAFSLLSRLNPWQQLLLSAVLVTLAAPAAA) is a signal peptide. The disordered stretch occupies residues 46 to 76 (FTQQGSQSASQGSTVAPSQPMMGVPQPSSQP). Residues 48–58 (QQGSQSASQGS) show a composition bias toward low complexity. PpiC domains follow at residues 230–332 (PTEF…KLVS) and 346–444 (IAQT…QVEN).

Its subcellular location is the periplasm. The enzyme catalyses [protein]-peptidylproline (omega=180) = [protein]-peptidylproline (omega=0). In terms of biological role, chaperone involved in the correct folding and assembly of outer membrane proteins. Recognizes specific patterns of aromatic residues and the orientation of their side chains, which are found more frequently in integral outer membrane proteins. May act in both early periplasmic and late outer membrane-associated steps of protein maturation. The sequence is that of Chaperone SurA from Cupriavidus metallidurans (strain ATCC 43123 / DSM 2839 / NBRC 102507 / CH34) (Ralstonia metallidurans).